We begin with the raw amino-acid sequence, 616 residues long: Dihydroxy-acid dehydratase (616 aa).

Position 81 (aspartate 81) interacts with Mg(2+). Cysteine 122 provides a ligand contact to [2Fe-2S] cluster. Residues aspartate 123 and lysine 124 each coordinate Mg(2+). Lysine 124 is subject to N6-carboxylysine. Cysteine 195 serves as a coordination point for [2Fe-2S] cluster. Glutamate 491 is a Mg(2+) binding site. Serine 517 (proton acceptor) is an active-site residue.

Belongs to the IlvD/Edd family. In terms of assembly, homodimer. Requires [2Fe-2S] cluster as cofactor. It depends on Mg(2+) as a cofactor.

It carries out the reaction (2R)-2,3-dihydroxy-3-methylbutanoate = 3-methyl-2-oxobutanoate + H2O. The enzyme catalyses (2R,3R)-2,3-dihydroxy-3-methylpentanoate = (S)-3-methyl-2-oxopentanoate + H2O. It functions in the pathway amino-acid biosynthesis; L-isoleucine biosynthesis; L-isoleucine from 2-oxobutanoate: step 3/4. The protein operates within amino-acid biosynthesis; L-valine biosynthesis; L-valine from pyruvate: step 3/4. Functionally, functions in the biosynthesis of branched-chain amino acids. Catalyzes the dehydration of (2R,3R)-2,3-dihydroxy-3-methylpentanoate (2,3-dihydroxy-3-methylvalerate) into 2-oxo-3-methylpentanoate (2-oxo-3-methylvalerate) and of (2R)-2,3-dihydroxy-3-methylbutanoate (2,3-dihydroxyisovalerate) into 2-oxo-3-methylbutanoate (2-oxoisovalerate), the penultimate precursor to L-isoleucine and L-valine, respectively. This chain is Dihydroxy-acid dehydratase, found in Sodalis glossinidius (strain morsitans).